The following is a 281-amino-acid chain: Glyoxalase 1 (281 aa).

VOC domains follow at residues 4–127 and 132–251; these read RALH…IGKA and KVLR…FVGD.

Belongs to the glyoxalase I family. As to expression, expressed in the following tissues in both larvae and adults: pharynx, pharyngeal-intestinal valve, intestine, anal sphincter, vulval muscle, seam cells and the nervous system.

Thought to act as a glyoxalase. May remove methylglyoxal from mitochondrial proteins. Has roles in reducing oxidative stress and increasing lifespan. In Caenorhabditis elegans, this protein is Glyoxalase 1 (glod-4).